We begin with the raw amino-acid sequence, 212 residues long: Response regulator SsrB (212 aa).

The interval 1-138 is required for prevention of DNA binding in absence of phosphorylation and for full stimulation of activity by acidic pH; the sequence is MKEYKILLVD…PTLNREAILA (138 aa). The 117-residue stretch at 5 to 121 folds into the Response regulatory domain; sequence KILLVDDHEI…VLLAALQTVA (117 aa). The residue at position 56 (aspartate 56) is a 4-aspartylphosphate. The region spanning 143–208 is the HTH luxR-type domain; that stretch reads DTTNHQLLTL…ELLNCARRMR (66 aa). The segment at residues 167-186 is a DNA-binding region (H-T-H motif); it reads NHGISEKLHISIKTVETHRM. Cysteine 203 carries the post-translational modification S-nitrosocysteine.

As to quaternary structure, homodimer; disulfide-linked; dimerizes upon DNA-binding. SsrB phosphorylated on Asp-56 activates the expression of virulence genes whereas the unphosphorylated form controls biofilm formation. Independently of SsrA, can be phosphorylated by small inorganic phosphate donors (such as acetyl phosphate or phosphoramidate). Post-translationally, disulfide bond formation at Cys-203 is not required for dimerization. In terms of processing, cys-203 may serve as a redox sensor that is nitrosylated in presence of reactive nitrogen species (RNS) generated by the host, the modification modulates its DNA-binding activity. Cys-203 is relatively resistant to oxidation by hydrogen peroxide.

The protein localises to the cytoplasm. Functionally, member of the two-component regulatory system SsrA/SsrB (SpiR/SsrB) that is required for intracellular proliferation and systemic dissemination within the host. When inside acidic Salmonella-containing vesicles (SCV) within host cells the SsrA sensor kinase autophosphorylates and the phosphoryl group is transferred to the response regulator SsrB; phosphorylated SsrB activates the expression of genes encoding virulence proteins, including pathogenicity island 2 (SPI2) and other horizontally acquired genes, but also ancestral genes; it can stimulate gene expression both by recruiting RNA polymerase and by antagonizing the action of the transcriptional repressor hns (H-NS). Can also act independently of sensor kinase ssrA to support the dormant carrier state by directing the transcription of factors required for biofilm formation. DNA-binding is stimulated by acidic pH conditions, and binding promotes bending of DNA both upstream and downstream of binding sites. Binds a degenerate 18-basepair palindromic sequence with a 7-4-7 internal organization, and regulates gene expression from 86 operons. When phosphorylated, activates the transcription of the ABC transporter complex dalSTUV, which helps protect the organism from oxidative killing by host neutrophils. Binds the phoP promoter to stimulate expression in acidic pH conditions. Antagonizes hns to activate the transcription of ugtL. Following invasion of host cells, binds the hilD and hilA regulatory regions to repress their transcription and consequently to repress transcription of pathogenicity island 1 (SPI1) encoding genes involved in host cell invasion. Binds the promoters of the flagellar master regulators flhD and flhC to repress their expression and consequently to suppress flagellar motility and promote evasion of the host inflammasome during infection of host cells. Activates expression of sseI/srfH, sifA, sifB, sseJ and regulates its own expression. When unphosphorylated, relieves the hns-mediated repression of master biofilm regulator csgD by binding and bending the csgD regulatory region. May act as early as in the lumen of the host small intestine, to activate the expression of virulence proteins prior to invasion of host cells. The polypeptide is Response regulator SsrB (Salmonella typhimurium (strain LT2 / SGSC1412 / ATCC 700720)).